The sequence spans 453 residues: UDP-N-acetylmuramoylalanine--D-glutamate ligase (453 aa).

Residue 115–121 (GSNGKTT) participates in ATP binding.

The protein belongs to the MurCDEF family.

Its subcellular location is the cytoplasm. The catalysed reaction is UDP-N-acetyl-alpha-D-muramoyl-L-alanine + D-glutamate + ATP = UDP-N-acetyl-alpha-D-muramoyl-L-alanyl-D-glutamate + ADP + phosphate + H(+). It functions in the pathway cell wall biogenesis; peptidoglycan biosynthesis. Cell wall formation. Catalyzes the addition of glutamate to the nucleotide precursor UDP-N-acetylmuramoyl-L-alanine (UMA). The polypeptide is UDP-N-acetylmuramoylalanine--D-glutamate ligase (Koribacter versatilis (strain Ellin345)).